The sequence spans 209 residues: uncharacterized protein (209 aa).

Active-site charge relay system residues include serine 119 and histidine 160.

It belongs to the peptidase S51 family.

This is an uncharacterized protein from Listeria innocua serovar 6a (strain ATCC BAA-680 / CLIP 11262).